The chain runs to 906 residues: Protein translocase subunit SecA (906 aa).

Residues glutamine 86, 104–108, and aspartate 511 contribute to the ATP site; that span reads GEGKT. Composition is skewed to basic and acidic residues over residues 853–865 and 877–888; these read HESVIDNNQRHDE and VRREGPKVKRND. The disordered stretch occupies residues 853 to 906; sequence HESVIDNNQRHDEDEQEEAPKVQQVRREGPKVKRNDPCPCGSGKKYKQCHSKVE. Cysteine 890, cysteine 892, cysteine 901, and histidine 902 together coordinate Zn(2+). The segment covering 896–906 has biased composition (basic residues); it reads KKYKQCHSKVE.

Belongs to the SecA family. In terms of assembly, monomer and homodimer. Part of the essential Sec protein translocation apparatus which comprises SecA, SecYEG and auxiliary proteins SecDF-YajC and YidC. It depends on Zn(2+) as a cofactor.

The protein resides in the cell inner membrane. It is found in the cytoplasm. The enzyme catalyses ATP + H2O + cellular proteinSide 1 = ADP + phosphate + cellular proteinSide 2.. Functionally, part of the Sec protein translocase complex. Interacts with the SecYEG preprotein conducting channel. Has a central role in coupling the hydrolysis of ATP to the transfer of proteins into and across the cell membrane, serving both as a receptor for the preprotein-SecB complex and as an ATP-driven molecular motor driving the stepwise translocation of polypeptide chains across the membrane. This is Protein translocase subunit SecA from Francisella tularensis subsp. tularensis (strain WY96-3418).